A 322-amino-acid chain; its full sequence is Aldo-keto reductase family 1 member C23 (322 aa).

Residue 20–24 (GFGTY) coordinates NADP(+). Position 31 (K31) interacts with substrate. Position 50 (D50) interacts with NADP(+). Catalysis depends on Y55, which acts as the Proton donor. Substrate is bound at residue H117. NADP(+) contacts are provided by residues 166–167 (SN), Q190, 216–221 (YSALGS), and 269–279 (KSYNEKRIKEN).

The protein belongs to the aldo/keto reductase family. In terms of assembly, monomer. As to expression, detected in follicle granulosa cells (at protein level). Detected in heart, lung, liver, kidney, stomach, uterus, testis, skeletal muscle and granulosa cells of the follicle wall.

It is found in the cytoplasm. In terms of biological role, NADP-dependent oxidoreductase that has 20-alpha-hydroxysteroid dehydrogenase activity. The polypeptide is Aldo-keto reductase family 1 member C23 (AKR1C23) (Equus caballus (Horse)).